Here is a 76-residue protein sequence, read N- to C-terminus: Kappa-actitoxin-Avd4d (76 aa).

The first 19 residues, 1–19 (MNKALFLCLVVLCAAVVFA), serve as a signal peptide directing secretion. Residues 20-31 (AEDLQKAKHVPF) constitute a propeptide that is removed on maturation. Disulfide bonds link Cys-37-Cys-72, Cys-39-Cys-65, and Cys-55-Cys-73.

This sequence belongs to the sea anemone type 3 (BDS) potassium channel toxin family. In terms of tissue distribution, moderately expressed in the ectodermal tissue from the distal and proximal tentacles, body wall, and oral disk.

The protein localises to the secreted. Its subcellular location is the nematocyst. In terms of biological role, blocks Kv3 voltage-gated potassium channels. Reduces blood pressure. The polypeptide is Kappa-actitoxin-Avd4d (Anemonia viridis (Snakelocks anemone)).